The following is a 152-amino-acid chain: FAD synthase (152 aa).

ATP contacts are provided by residues 16–17 (TF), 21–24 (HPGH), D101, and Y129.

The protein belongs to the archaeal FAD synthase family. In terms of assembly, homodimer. It depends on a divalent metal cation as a cofactor.

The enzyme catalyses FMN + ATP + H(+) = FAD + diphosphate. It participates in cofactor biosynthesis; FAD biosynthesis; FAD from FMN: step 1/1. Catalyzes the transfer of the AMP portion of ATP to flavin mononucleotide (FMN) to produce flavin adenine dinucleotide (FAD) coenzyme. This is FAD synthase from Methanocaldococcus vulcanius (strain ATCC 700851 / DSM 12094 / M7) (Methanococcus vulcanius).